The sequence spans 419 residues: Structure-specific endonuclease subunit slx4 (419 aa).

It belongs to the SLX4 family. Forms a heterodimer with slx1. Phosphorylated in response to DNA damage.

The protein resides in the nucleus. It localises to the nucleolus. Regulatory subunit of the slx1-slx4 structure-specific endonuclease that resolves DNA secondary structures generated during DNA repair and recombination. Has endonuclease activity towards branched DNA substrates, introducing single-strand cuts in duplex DNA close to junctions with ss-DNA. Has a preference for stem-loop (SL) and splayed arm Y structures. Introduces a single-strand cut in duplex DNA on the 3' side of a double-strand/single-strand junction with respect to the single-strand moving 3' to 5' away from the junction. Plays a critical role in maintaining the integrity of the ribosomal DNA (rDNA) loci, where it has a role in re-starting stalled replication forks. The complex initiates homologous recombination (HR) events, used to maintain rDNA copy number, in the rDNA repeats that are processed by a mechanism that requires rad22, but not rhp51. Has Holliday junction resolvase activity in vitro. Slx4 is required for efficient processing of DNA substrates. This chain is Structure-specific endonuclease subunit slx4, found in Schizosaccharomyces pombe (strain 972 / ATCC 24843) (Fission yeast).